The following is a 212-amino-acid chain: ATP-dependent dethiobiotin synthetase BioD (212 aa).

12–17 serves as a coordination point for ATP; sequence DCGKTF. Threonine 16 lines the Mg(2+) pocket. Lysine 33 is an active-site residue. Serine 37 serves as a coordination point for substrate. ATP is bound by residues aspartate 50, 110-113, and 170-171; these read EGAG and NC. Mg(2+)-binding residues include aspartate 50 and glutamate 110.

It belongs to the dethiobiotin synthetase family. In terms of assembly, homodimer. Mg(2+) is required as a cofactor.

The protein localises to the cytoplasm. The catalysed reaction is (7R,8S)-7,8-diammoniononanoate + CO2 + ATP = (4R,5S)-dethiobiotin + ADP + phosphate + 3 H(+). It functions in the pathway cofactor biosynthesis; biotin biosynthesis; biotin from 7,8-diaminononanoate: step 1/2. Catalyzes a mechanistically unusual reaction, the ATP-dependent insertion of CO2 between the N7 and N8 nitrogen atoms of 7,8-diaminopelargonic acid (DAPA, also called 7,8-diammoniononanoate) to form a ureido ring. This Legionella pneumophila (strain Lens) protein is ATP-dependent dethiobiotin synthetase BioD.